The sequence spans 1088 residues: DNA-directed RNA polymerase subunit beta (1088 aa).

This sequence belongs to the RNA polymerase beta chain family. In terms of assembly, in plastids the minimal PEP RNA polymerase catalytic core is composed of four subunits: alpha, beta, beta', and beta''. When a (nuclear-encoded) sigma factor is associated with the core the holoenzyme is formed, which can initiate transcription.

It is found in the plastid. The protein resides in the chloroplast. The enzyme catalyses RNA(n) + a ribonucleoside 5'-triphosphate = RNA(n+1) + diphosphate. DNA-dependent RNA polymerase catalyzes the transcription of DNA into RNA using the four ribonucleoside triphosphates as substrates. This chain is DNA-directed RNA polymerase subunit beta, found in Ostreococcus tauri.